Reading from the N-terminus, the 428-residue chain is 3-phosphoshikimate 1-carboxyvinyltransferase (428 aa).

Residues K20, S21, and R25 each contribute to the 3-phosphoshikimate site. K20 contacts phosphoenolpyruvate. 2 residues coordinate phosphoenolpyruvate: G92 and R120. Residues S166, Q168, D314, and K341 each contribute to the 3-phosphoshikimate site. Phosphoenolpyruvate is bound at residue Q168. Catalysis depends on D314, which acts as the Proton acceptor. 2 residues coordinate phosphoenolpyruvate: R345 and R387.

Belongs to the EPSP synthase family. In terms of assembly, monomer.

It localises to the cytoplasm. The enzyme catalyses 3-phosphoshikimate + phosphoenolpyruvate = 5-O-(1-carboxyvinyl)-3-phosphoshikimate + phosphate. The protein operates within metabolic intermediate biosynthesis; chorismate biosynthesis; chorismate from D-erythrose 4-phosphate and phosphoenolpyruvate: step 6/7. In terms of biological role, catalyzes the transfer of the enolpyruvyl moiety of phosphoenolpyruvate (PEP) to the 5-hydroxyl of shikimate-3-phosphate (S3P) to produce enolpyruvyl shikimate-3-phosphate and inorganic phosphate. This Listeria monocytogenes serotype 4b (strain CLIP80459) protein is 3-phosphoshikimate 1-carboxyvinyltransferase.